The chain runs to 477 residues: uncharacterized protein (477 aa).

This is an uncharacterized protein from Aquifex aeolicus (strain VF5).